Reading from the N-terminus, the 127-residue chain is Large ribosomal subunit protein bL20 (127 aa).

This sequence belongs to the bacterial ribosomal protein bL20 family.

Functionally, binds directly to 23S ribosomal RNA and is necessary for the in vitro assembly process of the 50S ribosomal subunit. It is not involved in the protein synthesizing functions of that subunit. The chain is Large ribosomal subunit protein bL20 from Streptomyces avermitilis (strain ATCC 31267 / DSM 46492 / JCM 5070 / NBRC 14893 / NCIMB 12804 / NRRL 8165 / MA-4680).